The following is a 726-amino-acid chain: Catalase-peroxidase (726 aa).

The interval 1 to 33 is disordered; sequence MSTSDDIHNTTATGKCPFHQGGHDQSAGGGTTT. Residues 105–226 constitute a cross-link (tryptophyl-tyrosyl-methioninium (Trp-Tyr) (with M-252)); that stretch reads WHGAGTYRSI…LGATEMGLIY (122 aa). H106 acts as the Proton acceptor in catalysis. Positions 226–252 form a cross-link, tryptophyl-tyrosyl-methioninium (Tyr-Met) (with W-105); that stretch reads YVNPEGPDHSGEPLSAAAAIRATFGNM. Position 267 (H267) interacts with heme b.

It belongs to the peroxidase family. Peroxidase/catalase subfamily. In terms of assembly, homodimer or homotetramer. The cofactor is heme b. Post-translationally, formation of the three residue Trp-Tyr-Met cross-link is important for the catalase, but not the peroxidase activity of the enzyme.

It catalyses the reaction H2O2 + AH2 = A + 2 H2O. The catalysed reaction is 2 H2O2 = O2 + 2 H2O. Bifunctional enzyme with both catalase and broad-spectrum peroxidase activity. This is Catalase-peroxidase from Escherichia coli O1:K1 / APEC.